Reading from the N-terminus, the 274-residue chain is Fatty-acid O-methyltransferase (274 aa).

It belongs to the methyltransferase superfamily.

The enzyme catalyses a fatty acid + S-adenosyl-L-methionine = a fatty acid methyl ester + S-adenosyl-L-homocysteine. Functionally, O-methyltransferase that modifies the hydroxy group of the fatty acids. Oleate is the most effective fatty acid acceptor. The protein is Fatty-acid O-methyltransferase (mtf2) of Mycolicibacterium smegmatis (strain ATCC 700084 / mc(2)155) (Mycobacterium smegmatis).